The following is a 429-amino-acid chain: BURP domain-containing protein 3 (429 aa).

A signal peptide spans M1–A21. The tract at residues G59–G81 is disordered. Residues F213 to S428 enclose the BURP domain.

In terms of tissue distribution, expressed in stems, leaves, shoot, panicles and stamen.

This Oryza sativa subsp. japonica (Rice) protein is BURP domain-containing protein 3 (BURP3).